The sequence spans 77 residues: Putative defensin-like protein 118 (77 aa).

Residues 1 to 25 (MSKSTILAIFMIVLVLGKVTKETQG) form the signal peptide. Intrachain disulfides connect Cys-29–Cys-75, Cys-39–Cys-58, Cys-44–Cys-69, and Cys-48–Cys-71.

It belongs to the DEFL family.

Its subcellular location is the secreted. In Arabidopsis thaliana (Mouse-ear cress), this protein is Putative defensin-like protein 118 (LCR52).